Reading from the N-terminus, the 148-residue chain is Large-conductance mechanosensitive channel (148 aa).

2 helical membrane passes run 9–29 and 79–99; these read AFAVKGNVVDMAVGIIIGAAF and IQTVIDFIIVAFAIFMGVKAI.

It belongs to the MscL family. Homopentamer.

The protein resides in the cell inner membrane. Functionally, channel that opens in response to stretch forces in the membrane lipid bilayer. May participate in the regulation of osmotic pressure changes within the cell. The chain is Large-conductance mechanosensitive channel from Pseudomonas syringae pv. syringae (strain B728a).